The chain runs to 74 residues: Putative membrane protein insertion efficiency factor (74 aa).

It belongs to the UPF0161 family.

Its subcellular location is the cell inner membrane. Could be involved in insertion of integral membrane proteins into the membrane. This is Putative membrane protein insertion efficiency factor from Blochmanniella floridana.